Here is a 426-residue protein sequence, read N- to C-terminus: Metacaspase-1B (426 aa).

Residues 1–14 (MSGYPGAGYNGGGY) show a composition bias toward gly residues. Residues 1–111 (MSGYPGAGYN…QAPPPPPQAP (111 aa)) are disordered. Residues 21-68 (QYGGYYPPQPAYNAYQQPPPQQQQYMVYHQPSPGPQQHQHWNPQQQTP) are compositionally biased toward low complexity. Catalysis depends on residues histidine 217 and cysteine 273.

It belongs to the peptidase C14B family.

Its function is as follows. Involved in cell death (apoptosis). This Neurospora crassa (strain ATCC 24698 / 74-OR23-1A / CBS 708.71 / DSM 1257 / FGSC 987) protein is Metacaspase-1B (casB).